Reading from the N-terminus, the 295-residue chain is Small ribosomal subunit protein uS2 (295 aa).

Residue Ser-2 is modified to N-acetylserine. A Phosphoserine modification is found at Ser-43. Residue Lys-52 is modified to N6-acetyllysine. Positions 54–113 (TWEKLLLAARAIVAIENPADVSVISSRNTGQRAVLKFAAATGATPIAGRFTPGTFTNQIQ) are interaction with PPP1R16B. An N6-acetyllysine; alternate modification is found at Lys-89. A Glycyl lysine isopeptide (Lys-Gly) (interchain with G-Cter in SUMO2); alternate cross-link involves residue Lys-89. Thr-97 is subject to Phosphothreonine. 2 laminin-binding regions span residues 161-180 (IPCN…MLAR) and 205-229 (RDPE…EFQG). [DE]-W-[ST] repeat units lie at residues 230–232 (EWT), 247–249 (DWS), 266–268 (DWS), 275–277 (DWS), and 293–295 (EWS). A laminin-binding region spans residues 242-295 (QPEVADWSEGVQVPSVPIQQFPTEDWSAQPATEDWSAAPTAQATEWVGATTEWS). The interval 266 to 295 (DWSAQPATEDWSAAPTAQATEWVGATTEWS) is disordered.

It belongs to the universal ribosomal protein uS2 family. Monomer (37LRP) and homodimer (67LR). Component of the small ribosomal subunit. Mature ribosomes consist of a small (40S) and a large (60S) subunit. The 40S subunit contains about 33 different proteins and 1 molecule of RNA (18S). The 60S subunit contains about 49 different proteins and 3 molecules of RNA (28S, 5.8S and 5S). Interacts with RPS21. Interacts with several laminins including at least LAMB1. Interacts with MDK. Interacts with PRNP. The mature dimeric form interacts with PPP1R16B (via its fourth ankyrin repeat). Interacts with PPP1CA only in the presence of PPP1R16B. In terms of processing, acylated. Acylation may be a prerequisite for conversion of the monomeric 37 kDa laminin receptor precursor (37LRP) to the mature dimeric 67 kDa laminin receptor (67LR), and may provide a mechanism for membrane association. Post-translationally, cleaved by stromelysin-3 (ST3) at the cell surface. Cleavage by stromelysin-3 may be a mechanism to alter cell-extracellular matrix interactions.

The protein resides in the cell membrane. Its subcellular location is the cytoplasm. The protein localises to the nucleus. Its function is as follows. Required for the assembly and/or stability of the 40S ribosomal subunit. Required for the processing of the 20S rRNA-precursor to mature 18S rRNA in a late step of the maturation of 40S ribosomal subunits. Also functions as a cell surface receptor for laminin. Plays a role in cell adhesion to the basement membrane and in the consequent activation of signaling transduction pathways. May play a role in cell fate determination and tissue morphogenesis. Also acts as a receptor for several other ligands, including the pathogenic prion protein, viruses, and bacteria. Acts as a PPP1R16B-dependent substrate of PPP1CA. Enables malignant tumor cells to penetrate laminin tissue and vessel barriers. Activates precursor thymic anti-OFA/iLRP specific cytotoxic T-cell. May induce CD8 T-suppressor cells secreting IL-10. This chain is Small ribosomal subunit protein uS2 (Rpsa), found in Mus musculus (Mouse).